The following is a 111-amino-acid chain: Shuttling pre-60S factor C23B6.02c (111 aa).

2 stretches are compositionally biased toward basic residues: residues 1 to 12 and 59 to 73; these read MAKKQSIRSRNF and SKKK…KKAK. 2 disordered regions span residues 1–25 and 47–111; these read MAKK…DSST and ALRS…QGDE. Positions 83-111 are enriched in basic and acidic residues; the sequence is QAREERLDTKISKSLQKQEKLKARKQGDE.

This sequence belongs to the ECM1 family. Associates with the pre-60S ribosomal particle and the nucleopore complex.

The protein resides in the nucleus. It localises to the nucleolus. It is found in the cytoplasm. Functionally, pre-ribosomal factor involved in 60S ribosomal protein subunit export from the nucleus. This chain is Shuttling pre-60S factor C23B6.02c, found in Schizosaccharomyces pombe (strain 972 / ATCC 24843) (Fission yeast).